The following is a 328-amino-acid chain: MDAVLLEHFPGGLDAFPSSYFDEDDFFTDQSSRDPLEDGDELLADEQAEVEFLSHQLHEYCYRDGACLLLQPAPPAAPLALAPPSSGGLGEPDDGGGGGYCCETGAPPGGFPYSPGSPPSCLAYPCAGAAVLSPGARLRGLSGAAAAAARRRRRVRSEAELQQLRQAANVRERRRMQSINDAFEGLRSHIPTLPYEKRLSKVDTLRLAIGYINFLSELVQADLPLRGGGAGGCGGPGGGGRLGGDSPGSQAQKVIICHRGTRSPSPSDPDYGLPPLAGHSLSWTDEKQLKEQNIIRTAKVWTPEDPRKLNSKSSFNNIENEPPFEFVS.

A bHLH domain is found at 163-215; it reads QLRQAANVRERRRMQSINDAFEGLRSHIPTLPYEKRLSKVDTLRLAIGYINFL. Disordered stretches follow at residues 259–278 and 305–328; these read RGTR…PLAG and DPRK…EFVS.

In terms of assembly, component of the pancreas transcription factor 1 complex (PTF1) which is composed of TCF3/p75, TCF12/p64 and PTF1A/p48. TCF3 is responsible for the nuclear import of the p48/p64 complex. Interacts with TCF3 and RBPSUH/RBP-Jkappa. As to expression, pancreas-specific (at protein level). Loss of expression is seen in ductal type pancreas cancers.

Its subcellular location is the nucleus. The protein resides in the cytoplasm. Functionally, transcription factor implicated in the cell fate determination in various organs. Binds to the E-box consensus sequence 5'-CANNTG-3'. Plays a role in early and late pancreas development and differentiation. Important for determining whether cells allocated to the pancreatic buds continue towards pancreatic organogenesis or revert back to duodenal fates. May be involved in the maintenance of exocrine pancreas-specific gene expression including ELA1 and amylase. Required for the formation of pancreatic acinar and ductal cells. Plays an important role in cerebellar development. Directly regulated by FOXN4 and RORC during retinal development, FOXN4-PTF1A pathway plays a central role in directing the differentiation of retinal progenitors towards horizontal and amacrine fates. This is Pancreas transcription factor 1 subunit alpha (PTF1A) from Homo sapiens (Human).